Here is a 429-residue protein sequence, read N- to C-terminus: Ribosomal RNA small subunit methyltransferase B (429 aa).

Residues 254–260 (CAGPGGK), aspartate 277, aspartate 303, and aspartate 322 each bind S-adenosyl-L-methionine. The active-site Nucleophile is the cysteine 375.

This sequence belongs to the class I-like SAM-binding methyltransferase superfamily. RsmB/NOP family.

It localises to the cytoplasm. It carries out the reaction cytidine(967) in 16S rRNA + S-adenosyl-L-methionine = 5-methylcytidine(967) in 16S rRNA + S-adenosyl-L-homocysteine + H(+). Specifically methylates the cytosine at position 967 (m5C967) of 16S rRNA. The protein is Ribosomal RNA small subunit methyltransferase B of Escherichia coli O6:K15:H31 (strain 536 / UPEC).